A 450-amino-acid polypeptide reads, in one-letter code: ATP-dependent protease ATPase subunit HslU (450 aa).

ATP contacts are provided by residues I18 and 60–65 (GVGKTE). The span at 140–151 (KTSSSGWAQQQE) shows a compositional bias: polar residues. The segment at 140–162 (KTSSSGWAQQQEETPENDDQRGT) is disordered. ATP contacts are provided by D263, E328, and R400.

Belongs to the ClpX chaperone family. HslU subfamily. A double ring-shaped homohexamer of HslV is capped on each side by a ring-shaped HslU homohexamer. The assembly of the HslU/HslV complex is dependent on binding of ATP.

It localises to the cytoplasm. Its function is as follows. ATPase subunit of a proteasome-like degradation complex; this subunit has chaperone activity. The binding of ATP and its subsequent hydrolysis by HslU are essential for unfolding of protein substrates subsequently hydrolyzed by HslV. HslU recognizes the N-terminal part of its protein substrates and unfolds these before they are guided to HslV for hydrolysis. The protein is ATP-dependent protease ATPase subunit HslU of Idiomarina loihiensis (strain ATCC BAA-735 / DSM 15497 / L2-TR).